The sequence spans 364 residues: DNA replication and repair protein RecF (364 aa).

Residue 30-37 (GNNAQGKT) coordinates ATP.

Belongs to the RecF family.

It is found in the cytoplasm. In terms of biological role, the RecF protein is involved in DNA metabolism; it is required for DNA replication and normal SOS inducibility. RecF binds preferentially to single-stranded, linear DNA. It also seems to bind ATP. This Clostridium botulinum (strain ATCC 19397 / Type A) protein is DNA replication and repair protein RecF.